We begin with the raw amino-acid sequence, 751 residues long: Glutamate carboxypeptidase 2 (751 aa).

The Cytoplasmic portion of the chain corresponds to 1–19; sequence MWNPLHETDSTSVAWRRPR. Position 10 is a phosphoserine (serine 10). A helical; Signal-anchor for type II membrane protein membrane pass occupies residues 20-43; that stretch reads WLCAGALVLAAGLFVLGFLFGWFI. Topologically, residues 44–750 are extracellular; the sequence is KSPNEAANIS…QAAAGTLREV (707 aa). N-linked (GlcNAc...) asparagine glycans are attached at residues asparagine 51, asparagine 77, asparagine 122, asparagine 141, asparagine 154, and asparagine 196. Residues arginine 211 and asparagine 258 each coordinate substrate. 2 residues coordinate Ca(2+): threonine 270 and tyrosine 273. The tract at residues 275-588 is NAALADase; that stretch reads ANEYAYRLQI…QVRGGIVFEL (314 aa). N-linked (GlcNAc...) asparagine glycosylation is present at asparagine 337. Zn(2+)-binding residues include histidine 378 and aspartate 388. Glutamate 425 contacts substrate. Glutamate 425 serves as the catalytic Nucleophile; for NAALADase activity. Glutamate 426 is a Zn(2+) binding site. Glutamate 434 and glutamate 437 together coordinate Ca(2+). Zn(2+) is bound at residue aspartate 454. 2 N-linked (GlcNAc...) asparagine glycosylation sites follow: asparagine 460 and asparagine 477. Substrate is bound by residues 518-519, asparagine 520, 535-537, tyrosine 553, and 553-554; these read SG, RAR, and YH. Histidine 554 contacts Zn(2+). Asparagine 614 carries N-linked (GlcNAc...) asparagine glycosylation. Serine 629 functions as the Charge relay system in the catalytic mechanism. N-linked (GlcNAc...) asparagine glycans are attached at residues asparagine 639 and asparagine 646. Active-site charge relay system residues include aspartate 667 and histidine 690. A substrate-binding site is contributed by 700–701; sequence KY.

The protein belongs to the peptidase M28 family. M28B subfamily. As to quaternary structure, homodimer. Zn(2+) is required as a cofactor. In terms of tissue distribution, high expression in the duodenum and in the jejunum brush-border membrane. Weak expression in kidney.

The protein localises to the cell membrane. It carries out the reaction Release of an unsubstituted, C-terminal glutamyl residue, typically from Ac-Asp-Glu or folylpoly-gamma-glutamates.. With respect to regulation, the NAALADase activity is inhibited by quisqualic acid, beta-NAAG and 2-(phosphonomethyl) pentanedioic acid (PMPA). Ethanol ingestion decreases the folate hydrolase activity by 50%. Functionally, has both folate hydrolase and N-acetylated-alpha-linked-acidic dipeptidase (NAALADase) activity. Has a preference for tri-alpha-glutamate peptides. In the intestine, required for the uptake of folate. In the brain, modulates excitatory neurotransmission through the hydrolysis of the neuropeptide, N-aceylaspartylglutamate (NAAG), thereby releasing glutamate. In terms of biological role, also exhibits a dipeptidyl-peptidase IV type activity. In vitro, cleaves Gly-Pro-AMC. The chain is Glutamate carboxypeptidase 2 (FOLH1) from Sus scrofa (Pig).